The sequence spans 910 residues: Protein translocase subunit SecA (910 aa).

Residues Gln86, Gly104–Thr108, and Asp508 contribute to the ATP site. The Zn(2+) site is built by Cys894, Cys896, Cys905, and Cys906.

The protein belongs to the SecA family. As to quaternary structure, monomer and homodimer. Part of the essential Sec protein translocation apparatus which comprises SecA, SecYEG and auxiliary proteins SecDF. Other proteins may also be involved. The cofactor is Zn(2+).

Its subcellular location is the cell membrane. It localises to the cytoplasm. It catalyses the reaction ATP + H2O + cellular proteinSide 1 = ADP + phosphate + cellular proteinSide 2.. Its function is as follows. Part of the Sec protein translocase complex. Interacts with the SecYEG preprotein conducting channel. Has a central role in coupling the hydrolysis of ATP to the transfer of proteins into and across the cell membrane, serving as an ATP-driven molecular motor driving the stepwise translocation of polypeptide chains across the membrane. This chain is Protein translocase subunit SecA, found in Acetivibrio thermocellus (strain ATCC 27405 / DSM 1237 / JCM 9322 / NBRC 103400 / NCIMB 10682 / NRRL B-4536 / VPI 7372) (Clostridium thermocellum).